A 472-amino-acid chain; its full sequence is Sulfate adenylyltransferase subunit 1 (472 aa).

In terms of domain architecture, tr-type G spans 22–239; sequence KELLRFLTCG…TVPIAGDKNY (218 aa). The tract at residues 31-38 is G1; sequence GSVDDGKS. 31-38 contributes to the GTP binding site; it reads GSVDDGKS. The G2 stretch occupies residues 89–93; sequence GITID. The interval 110 to 113 is G3; sequence DTPG. GTP-binding positions include 110–114 and 165–168; these read DTPGH and NKMD. A G4 region spans residues 165 to 168; the sequence is NKMD. Positions 202 to 204 are G5; that stretch reads SAL.

Belongs to the TRAFAC class translation factor GTPase superfamily. Classic translation factor GTPase family. CysN/NodQ subfamily. As to quaternary structure, heterodimer composed of CysD, the smaller subunit, and CysN.

The catalysed reaction is sulfate + ATP + H(+) = adenosine 5'-phosphosulfate + diphosphate. It functions in the pathway sulfur metabolism; hydrogen sulfide biosynthesis; sulfite from sulfate: step 1/3. Functionally, with CysD forms the ATP sulfurylase (ATPS) that catalyzes the adenylation of sulfate producing adenosine 5'-phosphosulfate (APS) and diphosphate, the first enzymatic step in sulfur assimilation pathway. APS synthesis involves the formation of a high-energy phosphoric-sulfuric acid anhydride bond driven by GTP hydrolysis by CysN coupled to ATP hydrolysis by CysD. In Cellvibrio japonicus (strain Ueda107) (Pseudomonas fluorescens subsp. cellulosa), this protein is Sulfate adenylyltransferase subunit 1.